Here is a 424-residue protein sequence, read N- to C-terminus: Riboflavin biosynthesis protein RibBA (424 aa).

The DHBP synthase stretch occupies residues 1 to 206; it reads MFTCEAGIAS…VDDLITYRYT (206 aa). Residues 32-33, Asp37, 145-149, and Glu169 contribute to the D-ribulose 5-phosphate site; these read RE and RPGHT. Glu33 contributes to the Mg(2+) binding site. Residue His148 coordinates Mg(2+). The interval 207-424 is GTP cyclohydrolase II; sequence YDSLVTKISS…YETVERMSCR (218 aa). Position 257-261 (257-261) interacts with GTP; sequence RVHSE. Zn(2+) contacts are provided by Cys262, Cys273, and Cys275. GTP-binding positions include Gln278, 301-303, and Thr323; that span reads EGR. Asp335 serves as the catalytic Proton acceptor; for GTP cyclohydrolase activity. The active-site Nucleophile; for GTP cyclohydrolase activity is the Arg337. The GTP site is built by Thr358 and Lys363.

In the N-terminal section; belongs to the DHBP synthase family. The protein in the C-terminal section; belongs to the GTP cyclohydrolase II family. It depends on Mg(2+) as a cofactor. Requires Mn(2+) as cofactor. Zn(2+) is required as a cofactor.

It catalyses the reaction D-ribulose 5-phosphate = (2S)-2-hydroxy-3-oxobutyl phosphate + formate + H(+). The catalysed reaction is GTP + 4 H2O = 2,5-diamino-6-hydroxy-4-(5-phosphoribosylamino)-pyrimidine + formate + 2 phosphate + 3 H(+). It functions in the pathway cofactor biosynthesis; riboflavin biosynthesis; 2-hydroxy-3-oxobutyl phosphate from D-ribulose 5-phosphate: step 1/1. It participates in cofactor biosynthesis; riboflavin biosynthesis; 5-amino-6-(D-ribitylamino)uracil from GTP: step 1/4. Catalyzes the conversion of D-ribulose 5-phosphate to formate and 3,4-dihydroxy-2-butanone 4-phosphate. Its function is as follows. Catalyzes the conversion of GTP to 2,5-diamino-6-ribosylamino-4(3H)-pyrimidinone 5'-phosphate (DARP), formate and pyrophosphate. The protein is Riboflavin biosynthesis protein RibBA of Chlamydia trachomatis serovar D (strain ATCC VR-885 / DSM 19411 / UW-3/Cx).